The chain runs to 672 residues: Protein seu-1 (672 aa).

2 disordered regions span residues 1 to 463 (MSSI…AGTE) and 576 to 672 (LAPP…LKHL). A compositionally biased stretch (basic and acidic residues) spans 8–20 (NDNRRPTFRDHRT). Over residues 25–34 (GRGGSGGGGR) the composition is skewed to gly residues. The span at 62-85 (RSQDHRQRSPEVRRHRSPEKESKD) shows a compositional bias: basic and acidic residues. Positions 87-105 (VVTSTGSSRGATSASVTSS) are enriched in low complexity. Composition is skewed to basic and acidic residues over residues 107 to 138 (RRHE…DADR), 189 to 226 (VSRH…KSNG), 234 to 268 (RRRE…KVED), and 289 to 306 (EQAK…ESHQ). Low complexity predominate over residues 307 to 317 (SAHSAAVSNAS). Positions 322 to 343 (SEEELDYEEDDIDVDLDGDIDV) are enriched in acidic residues. 6 stretches are compositionally biased toward basic and acidic residues: residues 366–375 (NDVKDETMEE), 382–396 (PEKK…DDKD), 410–424 (RRED…SDHH), 436–447 (RATDHKESRRSE), 607–626 (SFGD…RHMD), and 636–659 (DHRV…ERGF).

As to expression, highly expressed in intestinal cells, lateral hypodermal (seam) cells, Pn.p ventral hypodermal cells, and spermatheca. Expressed at low levels in the ventral nerve cord.

The protein resides in the nucleus. In terms of biological role, together with unc-5, involved in touch neuron axon guidance. During gonad morphogenesis, plays a role in the unc-5-/unc-6-mediated migration of distal tip cells along the body. The polypeptide is Protein seu-1 (Caenorhabditis elegans).